Reading from the N-terminus, the 392-residue chain is L-rhamnonate dehydratase (392 aa).

Substrate is bound by residues His22 and Arg48. The Mg(2+) site is built by Asp214, Glu240, and Glu268. His318 serves as the catalytic Proton acceptor. Glu338 serves as a coordination point for substrate.

This sequence belongs to the mandelate racemase/muconate lactonizing enzyme family. RhamD subfamily. In terms of assembly, homooctamer; tetramer of dimers. The cofactor is Mg(2+).

It catalyses the reaction L-rhamnonate = 2-dehydro-3-deoxy-L-rhamnonate + H2O. Its function is as follows. Catalyzes the dehydration of L-rhamnonate to 2-keto-3-deoxy-L-rhamnonate (KDR). The chain is L-rhamnonate dehydratase from Burkholderia ambifaria (strain ATCC BAA-244 / DSM 16087 / CCUG 44356 / LMG 19182 / AMMD) (Burkholderia cepacia (strain AMMD)).